A 297-amino-acid polypeptide reads, in one-letter code: Putative lipid kinase MamU (297 aa).

In terms of domain architecture, DAGKc spans 43 to 131 (EGKDMGRMVR…MDVGRVNDRY (89 aa)). 68 to 74 (GDGSLSR) is a binding site for ATP. Glutamate 274 (proton acceptor) is an active-site residue.

The protein belongs to the diacylglycerol/lipid kinase family.

It is found in the cytoplasm. Functionally, might phosphorylate lipids. The chain is Putative lipid kinase MamU from Magnetospirillum gryphiswaldense (strain DSM 6361 / JCM 21280 / NBRC 15271 / MSR-1).